A 138-amino-acid polypeptide reads, in one-letter code: Small ribosomal subunit protein uS11 (138 aa).

Residues 1–12 (MAPKKPGAAGPK) are compositionally biased toward low complexity. Disordered regions lie at residues 1–27 (MAPK…NVPH) and 119–138 (ISDV…RRRV). A compositionally biased stretch (basic residues) spans 13–22 (KAQKTRRREK).

This sequence belongs to the universal ribosomal protein uS11 family. In terms of assembly, part of the 30S ribosomal subunit. Interacts with proteins S7 and S18. Binds to IF-3.

Functionally, located on the platform of the 30S subunit, it bridges several disparate RNA helices of the 16S rRNA. Forms part of the Shine-Dalgarno cleft in the 70S ribosome. The polypeptide is Small ribosomal subunit protein uS11 (Mycobacteroides abscessus (strain ATCC 19977 / DSM 44196 / CCUG 20993 / CIP 104536 / JCM 13569 / NCTC 13031 / TMC 1543 / L948) (Mycobacterium abscessus)).